A 488-amino-acid chain; its full sequence is Cytochrome P450 monooxygenase orf2 (488 aa).

The chain crosses the membrane as a helical span at residues Leu7–Val27. Heme is bound at residue Cys432.

This sequence belongs to the cytochrome P450 family. Requires heme as cofactor.

It is found in the membrane. The protein operates within secondary metabolite biosynthesis. Cytochrome P450 monooxygenase; part of the gene cluster that mediates the biosynthesis of nigerpyrone and its derivatives carbonarone A and pestalamide A. The biosynthesis pathway begins with the polyketide assembly by epaA to form phenylacetyl triketide precursor from successive condensation of two malonyl-CoA, presumably with one phenylacetyl-CoA starter unit produced by the phenylacetyl-CoA ligase epaB. For the nigerpyrone biosynthesis, the reactive polyketide chain is released as an aldehyde through the R-domain. A nonenzymatic cyclization and dehydration may create nigerpyrone. For the biosynthesis of carbonarone A and pestalamide A, an extra methyl group is added through the C-methyltransferase domain. Several further steps involving the dehydrogenase orf1, the cytochrome P450 monooxygenase orf2 and the FAD-dependent monooxygenase orf3 are required to form a carbonarone A precursor which is converted to carbonarone A via cyclization. The O-acetyltransferase epaC could catalyze the transfer of 2-methylsuccinyl-CoA, a common intermediate in the ethylmalonyl-CoA pathway, to generate the final product pestalamide A. The polypeptide is Cytochrome P450 monooxygenase orf2 (Aspergillus niger (strain ATCC MYA-4892 / CBS 513.88 / FGSC A1513)).